The following is a 325-amino-acid chain: Homoserine O-succinyltransferase (325 aa).

The Acyl-thioester intermediate role is filled by Cys-142. Substrate-binding residues include Lys-163 and Ser-191. Residue His-234 is the Proton acceptor of the active site. Glu-236 is a catalytic residue. A substrate-binding site is contributed by Arg-248.

The protein belongs to the MetA family.

It localises to the cytoplasm. It carries out the reaction L-homoserine + succinyl-CoA = O-succinyl-L-homoserine + CoA. It participates in amino-acid biosynthesis; L-methionine biosynthesis via de novo pathway; O-succinyl-L-homoserine from L-homoserine: step 1/1. Functionally, transfers a succinyl group from succinyl-CoA to L-homoserine, forming succinyl-L-homoserine. This Bradyrhizobium japonicum protein is Homoserine O-succinyltransferase.